The primary structure comprises 244 residues: Biosynthetic peptidoglycan transglycosylase (244 aa).

Residues 25–45 form a helical membrane-spanning segment; it reads LLLLLTAALLYQSWFLLHIVY.

Belongs to the glycosyltransferase 51 family.

It is found in the cell inner membrane. It carries out the reaction [GlcNAc-(1-&gt;4)-Mur2Ac(oyl-L-Ala-gamma-D-Glu-L-Lys-D-Ala-D-Ala)](n)-di-trans,octa-cis-undecaprenyl diphosphate + beta-D-GlcNAc-(1-&gt;4)-Mur2Ac(oyl-L-Ala-gamma-D-Glu-L-Lys-D-Ala-D-Ala)-di-trans,octa-cis-undecaprenyl diphosphate = [GlcNAc-(1-&gt;4)-Mur2Ac(oyl-L-Ala-gamma-D-Glu-L-Lys-D-Ala-D-Ala)](n+1)-di-trans,octa-cis-undecaprenyl diphosphate + di-trans,octa-cis-undecaprenyl diphosphate + H(+). Its pathway is cell wall biogenesis; peptidoglycan biosynthesis. Peptidoglycan polymerase that catalyzes glycan chain elongation from lipid-linked precursors. The protein is Biosynthetic peptidoglycan transglycosylase of Nitrosomonas europaea (strain ATCC 19718 / CIP 103999 / KCTC 2705 / NBRC 14298).